The sequence spans 225 residues: Cytidylate kinase (225 aa).

12-20 (GPSGAGKGT) contacts ATP.

This sequence belongs to the cytidylate kinase family. Type 1 subfamily.

It localises to the cytoplasm. The catalysed reaction is CMP + ATP = CDP + ADP. It carries out the reaction dCMP + ATP = dCDP + ADP. The sequence is that of Cytidylate kinase from Pectobacterium atrosepticum (strain SCRI 1043 / ATCC BAA-672) (Erwinia carotovora subsp. atroseptica).